Reading from the N-terminus, the 245-residue chain is Enolase-phosphatase E1 (245 aa).

The protein belongs to the HAD-like hydrolase superfamily. MasA/MtnC family. Monomer. It depends on Mg(2+) as a cofactor.

It carries out the reaction 5-methylsulfanyl-2,3-dioxopentyl phosphate + H2O = 1,2-dihydroxy-5-(methylsulfanyl)pent-1-en-3-one + phosphate. It participates in amino-acid biosynthesis; L-methionine biosynthesis via salvage pathway; L-methionine from S-methyl-5-thio-alpha-D-ribose 1-phosphate: step 3/6. The protein operates within amino-acid biosynthesis; L-methionine biosynthesis via salvage pathway; L-methionine from S-methyl-5-thio-alpha-D-ribose 1-phosphate: step 4/6. Functionally, bifunctional enzyme that catalyzes the enolization of 2,3-diketo-5-methylthiopentyl-1-phosphate (DK-MTP-1-P) into the intermediate 2-hydroxy-3-keto-5-methylthiopentenyl-1-phosphate (HK-MTPenyl-1-P), which is then dephosphorylated to form the acireductone 1,2-dihydroxy-3-keto-5-methylthiopentene (DHK-MTPene). The protein is Enolase-phosphatase E1 of Synechococcus sp. (strain CC9902).